Consider the following 412-residue polypeptide: Multifunctional CCA protein (412 aa).

Gly8 and Arg11 together coordinate ATP. Residues Gly8 and Arg11 each contribute to the CTP site. Mg(2+)-binding residues include Asp21 and Asp23. ATP is bound by residues Arg91, Arg137, and Arg140. Arg91, Arg137, and Arg140 together coordinate CTP. An HD domain is found at 228–329 (TGIHTLMTLS…VKLFDSIDAW (102 aa)).

Belongs to the tRNA nucleotidyltransferase/poly(A) polymerase family. Bacterial CCA-adding enzyme type 1 subfamily. As to quaternary structure, monomer. Can also form homodimers and oligomers. It depends on Mg(2+) as a cofactor. Requires Ni(2+) as cofactor.

It catalyses the reaction a tRNA precursor + 2 CTP + ATP = a tRNA with a 3' CCA end + 3 diphosphate. It carries out the reaction a tRNA with a 3' CCA end + 2 CTP + ATP = a tRNA with a 3' CCACCA end + 3 diphosphate. Catalyzes the addition and repair of the essential 3'-terminal CCA sequence in tRNAs without using a nucleic acid template. Adds these three nucleotides in the order of C, C, and A to the tRNA nucleotide-73, using CTP and ATP as substrates and producing inorganic pyrophosphate. tRNA 3'-terminal CCA addition is required both for tRNA processing and repair. Also involved in tRNA surveillance by mediating tandem CCA addition to generate a CCACCA at the 3' terminus of unstable tRNAs. While stable tRNAs receive only 3'-terminal CCA, unstable tRNAs are marked with CCACCA and rapidly degraded. This chain is Multifunctional CCA protein, found in Shigella dysenteriae serotype 1 (strain Sd197).